The primary structure comprises 708 residues: Kin of IRRE-like protein 2 (708 aa).

The signal sequence occupies residues 1-20 (MLRMRVPALLVLLFCFRGRA). Residues 21–510 (GPSPHFLQQP…GRRDLLPTVR (490 aa)) lie on the Extracellular side of the membrane. Ig-like C2-type domains are found at residues 24 to 118 (PHFL…AQLH), 123 to 222 (PEAP…ITLS), 227 to 307 (PEVT…TALD), 312 to 394 (PILQ…ARLT), and 398 to 501 (PPVV…ASLG). Cysteine 45 and cysteine 103 form a disulfide bridge. N-linked (GlcNAc...) asparagine glycosylation is present at asparagine 143. 2 cysteine pairs are disulfide-bonded: cysteine 146/cysteine 204 and cysteine 248/cysteine 291. Positions 149–151 (RGD) match the Cell attachment site motif. N-linked (GlcNAc...) asparagine glycosylation occurs at asparagine 301. 2 disulfides stabilise this stretch: cysteine 333–cysteine 375 and cysteine 419–cysteine 485. N-linked (GlcNAc...) asparagine glycosylation is present at asparagine 484. The chain crosses the membrane as a helical span at residues 511 to 531 (IVAGVAAATTTLLMVITGVAL). The Cytoplasmic segment spans residues 532-708 (CCWRHSKASA…PSHPRLQTHV (177 aa)). The interval 545 to 601 (EQKNLMRIPGSSDGSSSRGPEEEETGSREDRGPIVHTDHSDLVLEEEGTLETKDPTN) is disordered. Low complexity predominate over residues 553-562 (PGSSDGSSSR). Positions 569–586 (TGSREDRGPIVHTDHSDL) are enriched in basic and acidic residues. Serine 571 carries the post-translational modification Phosphoserine. Phosphotyrosine occurs at positions 603, 604, and 661. Positions 684-708 (LAPGTPPFPYAAFPTPSHPRLQTHV) are disordered.

Belongs to the immunoglobulin superfamily. Homodimer. Interacts with NPHS2/podocin (via the C-terminus). Interacts with NPHS1 (via the Ig-like domains). Interacts with FYN. Post-translationally, N-glycosylated. The extracellular domain is cleaved leading to the generation of a soluble fragment and a membrane-bound C-terminal fragment, which is further cleaved by gamma-secretase. Highly expressed in beta-cells of the pancreatic islets.

It is found in the cell membrane. Functionally, may regulate basal insulin secretion. This chain is Kin of IRRE-like protein 2 (KIRREL2), found in Homo sapiens (Human).